The following is a 280-amino-acid chain: Thioredoxin-related transmembrane protein 1 (280 aa).

An N-terminal signal peptide occupies residues 1-26; that stretch reads MAPSGSLAVPLAVLVLLLWGAPWTHG. The 106-residue stretch at 27 to 132 folds into the Thioredoxin domain; that stretch reads RRSNVRVITD…FINFISDKEW (106 aa). At 27 to 180 the chain is on the extracellular side; it reads RRSNVRVITD…EDLGLPVWGS (154 aa). Catalysis depends on nucleophile residues Cys-56 and Cys-59. Cys-56 and Cys-59 form a disulfide bridge. Residues 181–203 traverse the membrane as a helical segment; that stretch reads YTVFALATLFSGLLLGLCMIFVA. Over 204–280 the chain is Cytoplasmic; it reads DCLCPSKRRR…LGPSLATDKS (77 aa). 2 S-palmitoyl cysteine lipidation sites follow: Cys-205 and Cys-207. A disordered region spans residues 218–280; that stretch reads PYPSKKLLSE…LGPSLATDKS (63 aa). Residues Ser-228, Ser-247, Ser-270, Ser-274, and Ser-280 each carry the phosphoserine modification. The segment covering 237–252 has biased composition (acidic residues); sequence EEQEADEEDVSEEEAE.

Interacts with ATP2A2. Post-translationally, palmitoylated; palmitoylation is required for localization to mitochondria-associated endoplasmic reticulum membrane (MAM). As to expression, ubiquitous. Highly expressed in kidney, liver, placenta and lung.

Its subcellular location is the endoplasmic reticulum membrane. It localises to the mitochondrion membrane. The protein localises to the secreted. It carries out the reaction Catalyzes the rearrangement of -S-S- bonds in proteins.. Its function is as follows. Thiredoxin domain-containing protein that participates in various redox reactions through the reversible oxidation of its active center dithiol to a disulfide and catalyze dithiol-disulfide exchange reactions. Acts as a key inhibitor of the alternative triglyceride biosynthesis pathway by inhibiting the activity of TMEM68/DIESL at the endoplasmic reticulum, thereby restricting accumulation of triacylglycerol. The alternative triglyceride biosynthesis pathway mediates formation of triacylglycerol from diacylglycerol and membrane phospholipids. Acts as a protein disulfide isomerase by catalyzing formation or reduction of disulfide bonds. Specifically mediates formation of disulfide bonds of transmembrane proteins at the endoplasmic reticulum membrane. Involved in endoplasmic reticulum-associated degradation (ERAD) via its protein disulfide isomerase activity by acting on folding-defective polypeptides at the endoplasmic reticulum membrane. Acts as a negative regulator of platelet aggregation following secretion in the extracellular space. Acts as a regulator of endoplasmic reticulum-mitochondria contact sites via its ability to regulate redox signals. Regulates endoplasmic reticulum-mitochondria Ca(2+) flux. The sequence is that of Thioredoxin-related transmembrane protein 1 from Homo sapiens (Human).